The chain runs to 530 residues: Tryptophan 7-halogenase RebH (530 aa).

FAD-binding residues include Gly-13, Thr-15, Ala-16, Ala-39, Asp-41, Glu-49, and Ala-50. Lys-79 is an active-site residue. Positions 197 and 348 each coordinate FAD. Glu-357 serves as a coordination point for L-tryptophan. The chloride site is built by Thr-359 and Gly-360. Ile-361 is an FAD binding site. Positions 454, 455, 461, and 465 each coordinate L-tryptophan.

This sequence belongs to the flavin-dependent halogenase family. Bacterial tryptophan halogenase subfamily. As to quaternary structure, homodimer.

It catalyses the reaction L-tryptophan + FADH2 + chloride + O2 = 7-chloro-L-tryptophan + FAD + 2 H2O. Functionally, involved in the biosynthesis of the indolocarbazole antitumor agent rebeccamycin. Catalyzes the chlorination of tryptophan (Trp) at C7 position to yield 7-chlorotryptophan. It is also able to use bromide ions to generate monobrominated Trp. The polypeptide is Tryptophan 7-halogenase RebH (rebH) (Lentzea aerocolonigenes (Lechevalieria aerocolonigenes)).